The following is a 966-amino-acid chain: C4 phosphoenolpyruvate carboxylase (966 aa).

Position 11 is a phosphoserine (serine 11). Residue histidine 172 is part of the active site. Tryptophan 283, arginine 450, and aspartate 597 together coordinate D-glucose 6-phosphate. Lysine 600 is an active-site residue. A D-glucose 6-phosphate-binding site is contributed by arginine 635. The active site involves arginine 641. Arginine 641 lines the L-aspartate pocket. Position 665 (threonine 665) interacts with D-glucose 6-phosphate. Glutamine 673 contacts L-aspartate. D-glucose 6-phosphate-binding positions include arginine 753 and 767-769 (RAI). Residues lysine 829, arginine 888, and asparagine 964 each coordinate L-aspartate.

Belongs to the PEPCase type 1 family. As to quaternary structure, homotetramer. Mg(2+) serves as cofactor. Expressed in mesophyll cells, but not in bundle-sheath, roots, stems and flowers.

It is found in the cytoplasm. It catalyses the reaction oxaloacetate + phosphate = phosphoenolpyruvate + hydrogencarbonate. It functions in the pathway photosynthesis; C4 acid pathway. 5 fold activation by the allosteric regulator glucose-6-phosphate. Low sensitivity to inhibition by L-malate and L-aspartate. Up-regulated by light-reversible phosphorylation. Its function is as follows. Forms oxaloacetate through the carboxylation of phosphoenolpyruvate (PEP). Catalyzes the first step of C4 photosynthesis. This Flaveria trinervia (Clustered yellowtops) protein is C4 phosphoenolpyruvate carboxylase.